Here is a 234-residue protein sequence, read N- to C-terminus: Synaptogyrin-4 (234 aa).

The MARVEL domain occupies Phe-18–Arg-169. The next 4 membrane-spanning stretches (helical) occupy residues Ile-25–Gly-45, Cys-66–Leu-86, Leu-104–Leu-124, and Ala-145–Phe-165. Positions Ser-191–Pro-226 are disordered. A compositionally biased stretch (low complexity) spans Pro-209 to Ser-221.

Belongs to the synaptogyrin family.

The protein resides in the membrane. The chain is Synaptogyrin-4 (SYNGR4) from Bos taurus (Bovine).